The primary structure comprises 398 residues: Cytochrome b (398 aa).

Transmembrane regions (helical) follow at residues 33–53 (FGSL…FLAM), 77–98 (WLIR…YLHI), 113–133 (WNIG…GYVL), and 178–198 (FFAF…IHLL). 2 residues coordinate heme b: H83 and H97. Heme b-binding residues include H182 and H196. An a ubiquinone-binding site is contributed by H201. 4 helical membrane passes run 226-246 (YKDL…SLFA), 288-308 (LGGV…PILH), 320-340 (FTQL…WIGG), and 347-367 (YVVI…FLIP).

This sequence belongs to the cytochrome b family. As to quaternary structure, the cytochrome bc1 complex contains 3 respiratory subunits (MT-CYB, CYC1 and UQCRFS1), 2 core proteins (UQCRC1 and UQCRC2) and probably 6 low-molecular weight proteins. It depends on heme b as a cofactor.

Its subcellular location is the mitochondrion inner membrane. Its function is as follows. Component of the ubiquinol-cytochrome c reductase complex (complex III or cytochrome b-c1 complex) that is part of the mitochondrial respiratory chain. The b-c1 complex mediates electron transfer from ubiquinol to cytochrome c. Contributes to the generation of a proton gradient across the mitochondrial membrane that is then used for ATP synthesis. This is Cytochrome b (mt-cyb) from Channa asiatica (Small snakehead).